Consider the following 426-residue polypeptide: Histidine--tRNA ligase 1 (426 aa).

This sequence belongs to the class-II aminoacyl-tRNA synthetase family. In terms of assembly, homodimer.

The protein resides in the cytoplasm. It carries out the reaction tRNA(His) + L-histidine + ATP = L-histidyl-tRNA(His) + AMP + diphosphate + H(+). This chain is Histidine--tRNA ligase 1, found in Bacillus cereus (strain ATCC 14579 / DSM 31 / CCUG 7414 / JCM 2152 / NBRC 15305 / NCIMB 9373 / NCTC 2599 / NRRL B-3711).